Consider the following 256-residue polypeptide: Alcohol dehydrogenase (256 aa).

NAD(+) is bound at residue 12 to 35; sequence FVAGLGGIGLDTSREIVKAGPKNL. Serine 140 is a substrate binding site. Residue tyrosine 153 is the Proton acceptor of the active site.

It belongs to the short-chain dehydrogenases/reductases (SDR) family. As to quaternary structure, homodimer.

It catalyses the reaction a primary alcohol + NAD(+) = an aldehyde + NADH + H(+). It carries out the reaction a secondary alcohol + NAD(+) = a ketone + NADH + H(+). This is Alcohol dehydrogenase (Adh) from Zaprionus tuberculatus (Vinegar fly).